The following is an 89-amino-acid chain: Small ribosomal subunit protein uS15 (89 aa).

It belongs to the universal ribosomal protein uS15 family. Part of the 30S ribosomal subunit. Forms a bridge to the 50S subunit in the 70S ribosome, contacting the 23S rRNA.

Functionally, one of the primary rRNA binding proteins, it binds directly to 16S rRNA where it helps nucleate assembly of the platform of the 30S subunit by binding and bridging several RNA helices of the 16S rRNA. Forms an intersubunit bridge (bridge B4) with the 23S rRNA of the 50S subunit in the ribosome. The sequence is that of Small ribosomal subunit protein uS15 from Renibacterium salmoninarum (strain ATCC 33209 / DSM 20767 / JCM 11484 / NBRC 15589 / NCIMB 2235).